A 432-amino-acid polypeptide reads, in one-letter code: Adenylosuccinate synthetase (432 aa).

GTP contacts are provided by residues 13–19 and 41–43; these read GDEGKGK and GHT. Aspartate 14 acts as the Proton acceptor in catalysis. 2 residues coordinate Mg(2+): aspartate 14 and glycine 41. Residues 14 to 17, 39 to 42, threonine 130, arginine 144, glutamine 225, threonine 240, and arginine 304 contribute to the IMP site; these read DEGK and NAGH. Histidine 42 acts as the Proton donor in catalysis. Residue 300–306 coordinates substrate; it reads AVTGRPR. GTP is bound by residues arginine 306, 332 to 334, and 415 to 417; these read KLD and STG.

Belongs to the adenylosuccinate synthetase family. Homodimer. Mg(2+) serves as cofactor.

The protein resides in the cytoplasm. The enzyme catalyses IMP + L-aspartate + GTP = N(6)-(1,2-dicarboxyethyl)-AMP + GDP + phosphate + 2 H(+). It functions in the pathway purine metabolism; AMP biosynthesis via de novo pathway; AMP from IMP: step 1/2. Functionally, plays an important role in the de novo pathway of purine nucleotide biosynthesis. Catalyzes the first committed step in the biosynthesis of AMP from IMP. The protein is Adenylosuccinate synthetase of Actinobacillus pleuropneumoniae serotype 5b (strain L20).